Here is a 477-residue protein sequence, read N- to C-terminus: Splicing factor 3A subunit 2 (477 aa).

The residue at position 1 (Met1) is an N-acetylmethionine. A disordered region spans residues Met1–Arg27. Lys10 bears the N6-acetyllysine mark. The segment at Tyr54–Arg84 adopts a Matrin-type zinc-finger fold. Ser153 carries the post-translational modification Phosphoserine. Composition is skewed to pro residues over residues Pro217–His295, Pro303–His323, and Pro331–Ser362. The tract at residues Pro217 to Asn477 is disordered. Over residues Val379–Gly398 the composition is skewed to low complexity. Composition is skewed to pro residues over residues Val399–Val441 and Val448–Asn477.

The protein belongs to the SF3A2 family. In terms of assembly, component of the 17S U2 SnRNP complex, a ribonucleoprotein complex that contains small nuclear RNA (snRNA) U2 and a number of specific proteins. Part of the SF3A subcomplex of the 17S U2 SnRNP complex which is composed of three subunits; SF3A3/SAP61, SF3A2/SAP62 and SF3A1/SAP114. SF3A associates with the splicing factor SF3B and a 12S RNA unit to form the mature 17S U2 small nuclear ribonucleoprotein complex (17S U2 snRNP). Identified in the spliceosome 'E' complex, a precursor of the spliceosome 'A' complex. Identified in the spliceosome 'A' and 'B' complexes. Identified in the spliceosome 'C' complex. Interacts with HTATSF1.

The protein resides in the nucleus. In terms of biological role, component of the 17S U2 SnRNP complex of the spliceosome, a large ribonucleoprotein complex that removes introns from transcribed pre-mRNAs. The 17S U2 SnRNP complex (1) directly participates in early spliceosome assembly and (2) mediates recognition of the intron branch site during pre-mRNA splicing by promoting the selection of the pre-mRNA branch-site adenosine, the nucleophile for the first step of splicing. Within the 17S U2 SnRNP complex, SF3A2 is part of the SF3A subcomplex that contributes to the assembly of the 17S U2 snRNP, and the subsequent assembly of the pre-spliceosome 'E' complex and the pre-catalytic spliceosome 'A' complex. Involved in pre-mRNA splicing as a component of pre-catalytic spliceosome 'B' complexes, including the Bact complex. Interacts directly with the duplex formed by U2 snRNA and the intron. The polypeptide is Splicing factor 3A subunit 2 (SF3A2) (Bos taurus (Bovine)).